The chain runs to 397 residues: 2-aminoadipate transaminase (397 aa).

Residue G40 participates in substrate binding. Pyridoxal 5'-phosphate contacts are provided by residues Y70, 100–101, N174, 202–205, 235–237, and R245; these read SQ, DDAY, and SFS. Position 174 (N174) interacts with substrate. K263 carries the N6-(pyridoxal phosphate)lysine modification. R368 contacts substrate.

It belongs to the class-I pyridoxal-phosphate-dependent aminotransferase family. Homodimer. The cofactor is pyridoxal 5'-phosphate.

The catalysed reaction is L-2-aminoadipate + 2-oxoglutarate = 2-oxoadipate + L-glutamate. Its pathway is amino-acid biosynthesis; L-lysine biosynthesis via AAA pathway; L-alpha-aminoadipate from 2-oxoglutarate: step 5/5. Its function is as follows. Catalyzes the transfer of an amino group between 2-oxoadipate (2-OA) and glutamate (Glu) to yield alpha-aminodipate (AAA). It can also transaminate glutamate, leucine, and aromatic amino acids. It also contributes in the biosynthesis of other amino acids such as leucine. In Thermus thermophilus (strain ATCC BAA-163 / DSM 7039 / HB27), this protein is 2-aminoadipate transaminase (lysN).